The sequence spans 199 residues: MIGRLRGILLEKRAPFLLLDVQGVGYELEAPLSTFYVLPAMGAEVILYTHLVVRDDAHLLYAFASEKERGLFRSLIRVNGVGAKLGLGILSGIEAESFTRCVQEGDTVSLTRLPGVGKKTAERLIVEMRDRLLDMPESGVAGMRPDRVDGSAPGTVAEAVSALVALGYKPNEASRAVRRLDTEALTTEEIIRQALQRML.

The interval Met-1–Ala-64 is domain I. The domain II stretch occupies residues Ser-65 to Met-143. A flexible linker region spans residues Arg-144–Gly-150. A domain III region spans residues Ser-151–Leu-199.

It belongs to the RuvA family. As to quaternary structure, homotetramer. Forms an RuvA(8)-RuvB(12)-Holliday junction (HJ) complex. HJ DNA is sandwiched between 2 RuvA tetramers; dsDNA enters through RuvA and exits via RuvB. An RuvB hexamer assembles on each DNA strand where it exits the tetramer. Each RuvB hexamer is contacted by two RuvA subunits (via domain III) on 2 adjacent RuvB subunits; this complex drives branch migration. In the full resolvosome a probable DNA-RuvA(4)-RuvB(12)-RuvC(2) complex forms which resolves the HJ.

It is found in the cytoplasm. Its function is as follows. The RuvA-RuvB-RuvC complex processes Holliday junction (HJ) DNA during genetic recombination and DNA repair, while the RuvA-RuvB complex plays an important role in the rescue of blocked DNA replication forks via replication fork reversal (RFR). RuvA specifically binds to HJ cruciform DNA, conferring on it an open structure. The RuvB hexamer acts as an ATP-dependent pump, pulling dsDNA into and through the RuvAB complex. HJ branch migration allows RuvC to scan DNA until it finds its consensus sequence, where it cleaves and resolves the cruciform DNA. This chain is Holliday junction branch migration complex subunit RuvA, found in Nitrosococcus oceani (strain ATCC 19707 / BCRC 17464 / JCM 30415 / NCIMB 11848 / C-107).